Reading from the N-terminus, the 374-residue chain is 4-hydroxybenzoate polyprenyltransferase, mitochondrial (374 aa).

A mitochondrion-targeting transit peptide spans 1 to 34 (MLRWGGAGLARGLRAVRSAWLRGPRGLPLALVRS). Residues 35-83 (AGVPGARDRRAPAPGTQRGRALSLSAAAVVNSAPRPLQPYLRLMRLDKP) are Mitochondrial matrix-facing. The chain crosses the membrane as a helical span at residues 84 to 104 (IGTWLLYLPCTWSIGLAADPG). At 105 to 108 (CFPD) the chain is on the mitochondrial intermembrane side. Residues 109–129 (WYMLSLFGTGAILMRGAGCTI) traverse the membrane as a helical segment. Residues 130–148 (NDMWDRDFDKKVTRTANRP) are Mitochondrial matrix-facing. The chain crosses the membrane as a helical span at residues 149–169 (IAAGDISTFQSFVFLGGQLTL). The Mitochondrial intermembrane portion of the chain corresponds to 170–172 (ALG). A helical transmembrane segment spans residues 173–193 (VLLCLNYYSIAMGAASLLLVV). Residues 194-200 (TYPLVKR) lie on the Mitochondrial matrix side of the membrane. Residues 201 to 221 (ITFWPQLALGLTFNWGALLGW) form a helical membrane-spanning segment. The Mitochondrial intermembrane portion of the chain corresponds to 222-230 (SAVKGSCDP). Residues 231–251 (AVCLPLYFSGVMWTLIYDTIY) form a helical membrane-spanning segment. The Mitochondrial matrix segment spans residues 252–277 (AHQDKKDDALIGLKSTALLFQENTRQ). Residues 278–298 (WLSGFGVAMVAALSLAGANNG) traverse the membrane as a helical segment. Topologically, residues 299 to 332 (QTVPYYAAVAAVGAHLAHQIYTVDIHRAEDCWDK) are mitochondrial intermembrane. The helical transmembrane segment at 333–353 (FTSNRTVGMLLFLGIVLGNLC) threads the bilayer. At 354–374 (KEKTEEAKDAEAVRVGSEQTS) the chain is on the mitochondrial matrix side.

Belongs to the UbiA prenyltransferase family. It depends on Mg(2+) as a cofactor.

It localises to the mitochondrion inner membrane. The catalysed reaction is an all-trans-polyprenyl diphosphate + 4-hydroxybenzoate = a 4-hydroxy-3-(all-trans-polyprenyl)benzoate + diphosphate. The enzyme catalyses all-trans-decaprenyl diphosphate + 4-hydroxybenzoate = 4-hydroxy-3-(all-trans-decaprenyl)benzoate + diphosphate. It catalyses the reaction all-trans-nonaprenyl diphosphate + 4-hydroxybenzoate = 4-hydroxy-3-(all-trans-nonaprenyl)benzoate + diphosphate. It participates in cofactor biosynthesis; ubiquinone biosynthesis. In terms of biological role, mediates the second step in the final reaction sequence of coenzyme Q (CoQ) biosynthesis. Catalyzes the prenylation of para-hydroxybenzoate (PHB) with an all-trans polyprenyl donor (such as all-trans-nonaprenyl diphosphate). The length of the polyprenyl side chain varies depending on the species, in humans, the side chain is comprised of 10 isoprenyls producing CoQ10 (also known as ubiquinone), whereas rodents predominantly generate CoQ9. However, this specificity is not complete, human tissues have low amounts of CoQ9 and rodent organs contain some CoQ10. Plays a central role in the biosynthesis of CoQ9. CoQ9 is a vital molecule that transports electrons from mitochondrial respiratory chain complexes. CoQs also function as cofactors for uncoupling protein and play a role as regulators of the extracellularly-induced ceramide-dependent apoptotic pathway. Regulates mitochondrial permeability transition pore (mPTP) opening and ROS production (pivotal events in cell death) in a tissue specific manner. The polypeptide is 4-hydroxybenzoate polyprenyltransferase, mitochondrial (Mus musculus (Mouse)).